The chain runs to 126 residues: Protein ApaG (126 aa).

Residues 2 to 126 enclose the ApaG domain; it reads SQLTSSVRVD…FRLSIPGLLH (125 aa).

The sequence is that of Protein ApaG from Shewanella halifaxensis (strain HAW-EB4).